A 425-amino-acid polypeptide reads, in one-letter code: Serine--tRNA ligase (425 aa).

Position 230–232 (230–232 (TAE)) interacts with L-serine. 261–263 (RSE) provides a ligand contact to ATP. E284 lines the L-serine pocket. 348-351 (EISS) is a binding site for ATP. S384 is an L-serine binding site.

This sequence belongs to the class-II aminoacyl-tRNA synthetase family. Type-1 seryl-tRNA synthetase subfamily. Homodimer. The tRNA molecule binds across the dimer.

It localises to the cytoplasm. It carries out the reaction tRNA(Ser) + L-serine + ATP = L-seryl-tRNA(Ser) + AMP + diphosphate + H(+). It catalyses the reaction tRNA(Sec) + L-serine + ATP = L-seryl-tRNA(Sec) + AMP + diphosphate + H(+). It functions in the pathway aminoacyl-tRNA biosynthesis; selenocysteinyl-tRNA(Sec) biosynthesis; L-seryl-tRNA(Sec) from L-serine and tRNA(Sec): step 1/1. Functionally, catalyzes the attachment of serine to tRNA(Ser). Is also able to aminoacylate tRNA(Sec) with serine, to form the misacylated tRNA L-seryl-tRNA(Sec), which will be further converted into selenocysteinyl-tRNA(Sec). The protein is Serine--tRNA ligase of Streptococcus equi subsp. zooepidemicus (strain H70).